Here is a 251-residue protein sequence, read N- to C-terminus: MSICDPALRNALRTLKLSGMLDTLDARLAQTRNGDLGHLEFLQALREDEIARRESAALTRRLRRAKFEAQATFEDFDFTANPKLPGAMLRDLAALRWLDAGESVILHGPVGVGKTHVAQALVHAVARRGGDVRFAKTSRMLSDLAGGHADRSWGQRIREYTKPLVLILDDFAMREHTAMHADDLYELISDRAITGKPLILTSNRAPNNWYGLFPNPVVAESLLDRLINTSHQILMDGPSYRPRKRPGRTTS.

108 to 115 (GPVGVGKT) provides a ligand contact to ATP.

This sequence belongs to the IS21/IS1162 putative ATP-binding protein family.

The protein is Putative ATP-binding protein Rv3427c in insertion sequence of Mycobacterium tuberculosis (strain ATCC 25618 / H37Rv).